A 186-amino-acid chain; its full sequence is Ribosome-recycling factor (186 aa).

Belongs to the RRF family.

The protein resides in the cytoplasm. Its function is as follows. Responsible for the release of ribosomes from messenger RNA at the termination of protein biosynthesis. May increase the efficiency of translation by recycling ribosomes from one round of translation to another. This is Ribosome-recycling factor from Leptothrix cholodnii (strain ATCC 51168 / LMG 8142 / SP-6) (Leptothrix discophora (strain SP-6)).